A 228-amino-acid polypeptide reads, in one-letter code: Urease subunit gamma/beta (228 aa).

A urease gamma region spans residues 1–101 (MQLTERERDK…LVTVHDPIRG (101 aa)). Residues 102–228 (AASRRVAGEY…ARAAGFGGAQ (127 aa)) form a urease beta region.

It in the N-terminal section; belongs to the urease gamma subunit family. This sequence in the C-terminal section; belongs to the urease beta subunit family. In terms of assembly, heterohexamer of 3 UreC (alpha) and 3 UreAB (gamma/beta) subunits.

It is found in the cytoplasm. It catalyses the reaction urea + 2 H2O + H(+) = hydrogencarbonate + 2 NH4(+). Its pathway is nitrogen metabolism; urea degradation; CO(2) and NH(3) from urea (urease route): step 1/1. This is Urease subunit gamma/beta from Deinococcus radiodurans (strain ATCC 13939 / DSM 20539 / JCM 16871 / CCUG 27074 / LMG 4051 / NBRC 15346 / NCIMB 9279 / VKM B-1422 / R1).